The primary structure comprises 950 residues: Oxysterol-binding protein-related protein 1 (950 aa).

Positions Met1 to Arg237 are interaction with RAB7A. ANK repeat units lie at residues Leu47–Met76, Met80–Val109, and Leu175–Leu204. One can recognise a PH domain in the interval Leu235–Ala334. A coiled-coil region spans residues Asn430–Glu463. The FFAT motif lies at Ser469–Ser483. Phosphoserine is present on Ser499. 2 disordered regions span residues Glu502–Ile530 and Lys795–Ser821. Residues Arg879–Asp913 adopt a coiled-coil conformation.

This sequence belongs to the OSBP family. In terms of assembly, interacts (via FFAT motif) with VAPA and VAPB. Interacts with the GTP-bound form of RAB7A. Interacts with OAS1B. Interacts (via FFAT motif) with MOSPD2 (via MSP domain). As to expression, ubiquitous.

It localises to the late endosome. Its function is as follows. Binds phospholipids; exhibits strong binding to phosphatidic acid and weak binding to phosphatidylinositol 3-phosphate. Stabilizes GTP-bound RAB7A on late endosomes/lysosomes and alters functional properties of late endocytic compartments via its interaction with RAB7A. Binds 25-hydroxycholesterol and cholesterol. The polypeptide is Oxysterol-binding protein-related protein 1 (Mus musculus (Mouse)).